The chain runs to 518 residues: GTPase MTG2, mitochondrial (518 aa).

Residues 1–23 (MSIAWSSVFKRELRLERFLPRVY) constitute a mitochondrion transit peptide. An Obg domain is found at 89 to 339 (GNFVDVRIVK…QHFLFELKSI (251 aa)). Residues 340-512 (ADLGLIGLPN…LKKKMFKCAR (173 aa)) form the OBG-type G domain. Residues 346 to 353 (GLPNAGKS), 394 to 398 (DIPGI), and 460 to 463 (NKVD) contribute to the GTP site.

It belongs to the TRAFAC class OBG-HflX-like GTPase superfamily. OBG GTPase family. As to quaternary structure, interacts with the mitochondrial 54S large ribosomal subunit.

It is found in the mitochondrion inner membrane. Required for mitochondrial protein synthesis. May be involved in mitochondrial ribosome biogenesis. This chain is GTPase MTG2, mitochondrial (MTG2), found in Saccharomyces cerevisiae (strain ATCC 204508 / S288c) (Baker's yeast).